Consider the following 382-residue polypeptide: Guanine nucleotide-binding protein G(s) subunit alpha (382 aa).

Positions 1–14 are enriched in polar residues; that stretch reads MGCFGSPTSKQSDV. The interval 1–31 is disordered; it reads MGCFGSPTSKQSDVNSEDSKSQKRRSDAISR. Residue Gly2 is the site of N-palmitoyl glycine attachment. The S-palmitoyl cysteine moiety is linked to residue Cys3. The span at 17–31 shows a compositional bias: basic and acidic residues; the sequence is EDSKSQKRRSDAISR. Residues 42–382 form the G-alpha domain; it reads ATHRLLLLGA…RMHLRQYELL (341 aa). Residues 45–58 form a G1 motif region; that stretch reads RLLLLGAGESGKST. Residues 50–57, 51–58, 186–192, 211–215, 212–216, 280–283, 281–284, and Ala354 contribute to the GTP site; these read GAGESGKS, AGESGKST, LRCRVLT, DVGGQ, VGGQR, NKQD, and KQDL. The Mg(2+) site is built by Ser57 and Thr192. A G2 motif region spans residues 184 to 192; it reads DILRCRVLT. The interval 207–216 is G3 motif; it reads FHMFDVGGQR. Residues 276–283 form a G4 motif region; sequence ILFLNKQD. The interval 352 to 357 is G5 motif; that stretch reads TCAVDT.

The protein belongs to the G-alpha family. G(s) subfamily. G proteins are composed of 3 units; alpha, beta and gamma. The alpha chain contains the guanine nucleotide binding site.

Its function is as follows. Guanine nucleotide-binding proteins (G proteins) are involved as modulators or transducers in various transmembrane signaling systems. The G(s) protein is involved in hormonal regulation of adenylate cyclase: it activates the cyclase. The protein is Guanine nucleotide-binding protein G(s) subunit alpha (G-salpha60A) of Drosophila pseudoobscura pseudoobscura (Fruit fly).